Here is a 279-residue protein sequence, read N- to C-terminus: Urease accessory protein UreD (279 aa).

It belongs to the UreD family. In terms of assembly, ureD, UreF and UreG form a complex that acts as a GTP-hydrolysis-dependent molecular chaperone, activating the urease apoprotein by helping to assemble the nickel containing metallocenter of UreC. The UreE protein probably delivers the nickel.

Its subcellular location is the cytoplasm. Required for maturation of urease via the functional incorporation of the urease nickel metallocenter. This Paracoccus denitrificans (strain Pd 1222) protein is Urease accessory protein UreD.